The sequence spans 368 residues: tRNA-specific 2-thiouridylase MnmA (368 aa).

ATP contacts are provided by residues 14 to 21 (AMSGGVDS) and Leu-40. The active-site Nucleophile is the Cys-108. A disulfide bond links Cys-108 and Cys-204. Gly-132 serves as a coordination point for ATP. The interval 154–156 (KDQ) is interaction with tRNA. Cys-204 (cysteine persulfide intermediate) is an active-site residue.

It belongs to the MnmA/TRMU family.

It is found in the cytoplasm. It carries out the reaction S-sulfanyl-L-cysteinyl-[protein] + uridine(34) in tRNA + AH2 + ATP = 2-thiouridine(34) in tRNA + L-cysteinyl-[protein] + A + AMP + diphosphate + H(+). Functionally, catalyzes the 2-thiolation of uridine at the wobble position (U34) of tRNA, leading to the formation of s(2)U34. This chain is tRNA-specific 2-thiouridylase MnmA, found in Rickettsia canadensis (strain McKiel).